Consider the following 533-residue polypeptide: Pre-mRNA-splicing factor cwf24 (533 aa).

Polar residues predominate over residues 1-17 (MEQKNLNINQASGSKIN). The segment at 1–69 (MEQKNLNINQ…MRDNIPIVSG (69 aa)) is disordered. The span at 27 to 43 (SRRRHRPRQGLKRKKGF) shows a compositional bias: basic residues. A C3H1-type zinc finger spans residues 184-212 (DYQPDVCKDYKLTGYCGYGDTCKFLHMRE). An RING-type zinc finger spans residues 254-292 (CLICKKDYRSPIATTCGHHFCEQCAITRYRKTPTCIQCG). Positions 379–524 (YFIREITESN…SAFYMVCPLS (146 aa)) constitute an N-acetyltransferase domain.

The protein belongs to the CWC24 family. In terms of assembly, belongs to the 40S cdc5-associated complex (or cwf complex), a spliceosome sub-complex reminiscent of a late-stage spliceosome composed of the U2, U5 and U6 snRNAs and at least brr2, cdc5, cwf2/prp3, cwf3/syf1, cwf4/syf3, cwf5/ecm2, spp42/cwf6, cwf7/spf27, cwf8, cwf9, cwf10, cwf11, cwf12, prp45/cwf13, cwf14, cwf15, cwf16, cwf17, cwf18, cwf19, cwf20, cwf21, cwf22, cwf23, cwf24, cwf25, cwf26, cyp7/cwf27, cwf28, cwf29/ist3, lea1, msl1, prp5/cwf1, prp10, prp12/sap130, prp17, prp22, sap61, sap62, sap114, sap145, slu7, smb1, smd1, smd3, smf1, smg1 and syf2.

The protein localises to the nucleus. Its function is as follows. Involved in mRNA splicing. In Schizosaccharomyces pombe (strain 972 / ATCC 24843) (Fission yeast), this protein is Pre-mRNA-splicing factor cwf24 (cwf24).